Reading from the N-terminus, the 622-residue chain is Procollagen galactosyltransferase 1 (622 aa).

Residues 1–29 (MAAAPRAGRRRGQPLLALLLLLLAPLPPG) form the signal peptide. N-linked (GlcNAc...) asparagine glycans are attached at residues asparagine 96, asparagine 184, and asparagine 381. Positions 588-606 (RAKSQKMREQQALSREAKN) are enriched in basic and acidic residues. The disordered stretch occupies residues 588–622 (RAKSQKMREQQALSREAKNSDVLQSPLDSAARDEL). An Endoplasmic reticulum retention motif motif is present at residues 619–622 (RDEL).

It belongs to the glycosyltransferase 25 family. In terms of processing, N-glycosylated. In terms of tissue distribution, ubiquitous with higher levels in placenta, heart, lung and spleen.

The protein resides in the endoplasmic reticulum lumen. It catalyses the reaction (5R)-5-hydroxy-L-lysyl-[collagen] + UDP-alpha-D-galactose = (5R)-5-O-(beta-D-galactosyl)-5-hydroxy-L-lysyl-[collagen] + UDP + H(+). In terms of biological role, beta-galactosyltransferase that transfers beta-galactose to hydroxylysine residues of type I collagen. By acting on collagen glycosylation, facilitates the formation of collagen triple helix. Also involved in the biosynthesis of collagen type IV. This Homo sapiens (Human) protein is Procollagen galactosyltransferase 1 (COLGALT1).